The following is a 167-amino-acid chain: Phospholipase A2 (167 aa).

Residues Trp-38, Gly-40, and Gly-42 each contribute to the Ca(2+) site. Cystine bridges form between Cys-39/Cys-61, Cys-60/Cys-99, Cys-67/Cys-92, Cys-90/Cys-127, and Cys-132/Cys-144. Residue Asn-47 is glycosylated (N-linked (GlcNAc...) asparagine). Residue His-64 is part of the active site. Asp-65 contributes to the Ca(2+) binding site. A propeptide spanning residues 136-140 (ARSAR) is cleaved from the precursor.

Belongs to the phospholipase A2 family. Group III subfamily. In terms of assembly, heterodimer composed of a large subunit and a small subunit; disulfide-linked. Requires Ca(2+) as cofactor. Expressed by the venom gland.

The protein localises to the secreted. The catalysed reaction is a 1,2-diacyl-sn-glycero-3-phosphocholine + H2O = a 1-acyl-sn-glycero-3-phosphocholine + a fatty acid + H(+). Phospholipase toxin, which catalyzes the calcium-dependent hydrolysis of the 2-acyl groups in 3-sn-phosphoglycerides. Inhibits both skeletal (RYR1) and cardiac (RYR2) ryanodine receptors (calcium release channels). Probably blocks ryanodine receptors by generating a lipid product. Shows hemolytic activity, but it is not know if it is direct or indirect. This is Phospholipase A2 from Hottentotta tamulus (Eastern Indian scorpion).